Reading from the N-terminus, the 381-residue chain is MKVVIASDSYKESLKAIEVCEAIERGFGAIFPKAEYVKIPIGDGGEGTVDSLVDATSGRIISFHVTGPLRESVQAFYGMSKDKKTAFIEMAAASGLQHVPAKKRNPLITTTKGTGELILHALDEGAEHIILGLGGSATNDGGAGMLSALGVRFINGKGEVIEPSGGTLHSIVSIDFSQMDSRLKHIKIEAACDVDNPLVGIRGASFVFGRQKGADEEMMKELDENLKHYAHILKQYLFCDVSKIPGAGAAGGMGAAVIAVLKGSLRRGIEIVLDYTNFDKHIEGADLIITGEGRIDEQTAYGKAPVGVAERAKLFHIPVIAIGGSVSPNYSAVHEKGIDAVFSITTSPTTLEEAYKVAEENIEMTAKNIAAVWKIASEKHF.

This sequence belongs to the glycerate kinase type-1 family.

The catalysed reaction is (R)-glycerate + ATP = (2R)-3-phosphoglycerate + ADP + H(+). In Bacillus cereus (strain ATCC 10987 / NRS 248), this protein is Glycerate kinase (glxK).